Reading from the N-terminus, the 145-residue chain is MLDIQQIQAIIPHRYPFLLVDRILEIEEGKRAVGIKNVSANESFFVGHFPEYPVMPGVLIVEALAQVGAVAMLKKEENRGRLAFFTGIDNCRFKKQVKPGDQLRLEVEIIRAKGPIGKGKGVATVDGELVCETEIMFALGDKKND.

His48 is an active-site residue.

The protein belongs to the thioester dehydratase family. FabZ subfamily.

Its subcellular location is the cytoplasm. The enzyme catalyses a (3R)-hydroxyacyl-[ACP] = a (2E)-enoyl-[ACP] + H2O. In terms of biological role, involved in unsaturated fatty acids biosynthesis. Catalyzes the dehydration of short chain beta-hydroxyacyl-ACPs and long chain saturated and unsaturated beta-hydroxyacyl-ACPs. This chain is 3-hydroxyacyl-[acyl-carrier-protein] dehydratase FabZ, found in Geobacillus sp. (strain WCH70).